The following is a 445-amino-acid chain: MDIRQVRETIEMIEEQHFDIRTITMGISLLDCIDPNIDRAAEKIYKKITEKASQLVAVGDDIAAELGIPIVNKRVSVTPIALIGAATDATDYLPLAKALDKAAHEIGVDFIGGFSALVQKGYQKGDEILINSIPKALAETQKVCASVNIGSTKSGINMTAVADMGRIIKETAEQSDLGAAKLVVFANAVEDNPFMAGAFHGVGEADVVINVGVSGPGVVKRALEKVKGESFDILAETVKKTAFKITRIGQLVGQMASERLGVKFGIVDLSLAPTPAVGDSVARVLEEMGLEMVGTHGTTAALALLNDAVKKGGVMACNQVGGLSGAFIPVSEDEGMIAAVQNGSLNLEKLEAMTAICSVGLDMIAIPEDTPYQTIAAMIADEAAIGVINQKTTAVRIIPKGKVGDMIEFGGLLGAAPVMAVNGHSSADFIARGGQIPAPIHSFKN.

Belongs to the UPF0210 family. In terms of assembly, homodimer.

The protein is UPF0210 protein SUB1511 of Streptococcus uberis (strain ATCC BAA-854 / 0140J).